Here is an 87-residue protein sequence, read N- to C-terminus: Large ribosomal subunit protein bL31B (87 aa).

The protein belongs to the bacterial ribosomal protein bL31 family. Type B subfamily. Part of the 50S ribosomal subunit.

In Latilactobacillus sakei subsp. sakei (strain 23K) (Lactobacillus sakei subsp. sakei), this protein is Large ribosomal subunit protein bL31B.